Consider the following 168-residue polypeptide: Transcriptional repressor NrdR (168 aa).

Residues 3–34 (CPYCGFAQDRVVDSRESKEADSIRRRRECERC) fold into a zinc finger. An ATP-cone domain is found at 49-139 (YMVVKKDGRR…VYRDFKDVNE (91 aa)).

The protein belongs to the NrdR family. The cofactor is Zn(2+).

Negatively regulates transcription of bacterial ribonucleotide reductase nrd genes and operons by binding to NrdR-boxes. The sequence is that of Transcriptional repressor NrdR from Acidobacterium capsulatum (strain ATCC 51196 / DSM 11244 / BCRC 80197 / JCM 7670 / NBRC 15755 / NCIMB 13165 / 161).